A 311-amino-acid chain; its full sequence is Ribonuclease HIII (311 aa).

Residues 95 to 311 enclose the RNase H type-2 domain; sequence MSIVGSDEVG…NTEKAFRLLK (217 aa). Positions 101, 102, and 206 each coordinate a divalent metal cation.

It belongs to the RNase HII family. RnhC subfamily. Mn(2+) is required as a cofactor. Requires Mg(2+) as cofactor.

The protein resides in the cytoplasm. It catalyses the reaction Endonucleolytic cleavage to 5'-phosphomonoester.. In terms of biological role, endonuclease that specifically degrades the RNA of RNA-DNA hybrids. This Bacillus cereus (strain ATCC 10987 / NRS 248) protein is Ribonuclease HIII.